The sequence spans 158 residues: MARMHTRRRGSSGSDKPVADDPPEWSDIDADAIEERVVELAEQGHEPSQIGMKLRDEGVKGTPIPDVKLATDKKVTTILEEHNAKPELPEDLRNLMERAIRLRRHVDENGQDMQNKRALQNTESKIRRLASYYRGDELDEDFTYSFEVAVELLEAEEA.

Basic residues predominate over residues 1–10 (MARMHTRRRG). Residues 1–66 (MARMHTRRRG…EGVKGTPIPD (66 aa)) are disordered. Acidic residues predominate over residues 21 to 32 (DPPEWSDIDADA). Residues 33–45 (IEERVVELAEQGH) show a composition bias toward basic and acidic residues.

It belongs to the universal ribosomal protein uS15 family. In terms of assembly, part of the 30S ribosomal subunit.

In Haloquadratum walsbyi (strain DSM 16790 / HBSQ001), this protein is Small ribosomal subunit protein uS15.